The sequence spans 360 residues: UDP-3-O-acylglucosamine N-acyltransferase (360 aa).

His-256 (proton acceptor) is an active-site residue. The segment at 341-360 (EGSGAETAARPDDDRDEGRG) is disordered. A compositionally biased stretch (basic and acidic residues) spans 349–360 (ARPDDDRDEGRG).

It belongs to the transferase hexapeptide repeat family. LpxD subfamily. In terms of assembly, homotrimer.

The catalysed reaction is a UDP-3-O-[(3R)-3-hydroxyacyl]-alpha-D-glucosamine + a (3R)-hydroxyacyl-[ACP] = a UDP-2-N,3-O-bis[(3R)-3-hydroxyacyl]-alpha-D-glucosamine + holo-[ACP] + H(+). The protein operates within bacterial outer membrane biogenesis; LPS lipid A biosynthesis. Its function is as follows. Catalyzes the N-acylation of UDP-3-O-acylglucosamine using 3-hydroxyacyl-ACP as the acyl donor. Is involved in the biosynthesis of lipid A, a phosphorylated glycolipid that anchors the lipopolysaccharide to the outer membrane of the cell. This is UDP-3-O-acylglucosamine N-acyltransferase from Rhodopseudomonas palustris (strain ATCC BAA-98 / CGA009).